The sequence spans 340 residues: MRVYYDRDCDVNLIKDMKVAILGYGSQGHAHALNLRDSGAKNVVVALREGSASAAKAEGEGLKVMGIAEAAAWCDVIMFTMPDELQAETYKKYVHDNLKDGAAIAFAHGLNVHFGLIEPKPGVDVIMMAPKGPGHTVRGEYTKGGGVPCLVAVHQNASDRALEIGLSYCSAIGGGRSGIIETNFREECETDLFGEQAVLCGGLVELIRMGFETLVEAGYAPEMAYFECLHEVKLIVDLIYEGGIANMNYSISNTAEYGEYVSGPRILPYDETKARMKAVLRDIQTGAFVRDFMQENQAGQPYFKGTRRLNDEHQIEQVGETLRGMMPWISEGKMVDKAKN.

In terms of domain architecture, KARI N-terminal Rossmann spans 1-182 (MRVYYDRDCD…GGGRSGIIET (182 aa)). NADP(+) is bound by residues 24 to 27 (YGSQ), R48, S51, S53, and 83 to 86 (DELQ). Residue H108 is part of the active site. G134 lines the NADP(+) pocket. One can recognise a KARI C-terminal knotted domain in the interval 183–329 (NFREECETDL…ETLRGMMPWI (147 aa)). D191, E195, E227, and E231 together coordinate Mg(2+). S252 is a substrate binding site.

It belongs to the ketol-acid reductoisomerase family. Mg(2+) serves as cofactor.

The catalysed reaction is (2R)-2,3-dihydroxy-3-methylbutanoate + NADP(+) = (2S)-2-acetolactate + NADPH + H(+). The enzyme catalyses (2R,3R)-2,3-dihydroxy-3-methylpentanoate + NADP(+) = (S)-2-ethyl-2-hydroxy-3-oxobutanoate + NADPH + H(+). Its pathway is amino-acid biosynthesis; L-isoleucine biosynthesis; L-isoleucine from 2-oxobutanoate: step 2/4. It participates in amino-acid biosynthesis; L-valine biosynthesis; L-valine from pyruvate: step 2/4. Involved in the biosynthesis of branched-chain amino acids (BCAA). Catalyzes an alkyl-migration followed by a ketol-acid reduction of (S)-2-acetolactate (S2AL) to yield (R)-2,3-dihydroxy-isovalerate. In the isomerase reaction, S2AL is rearranged via a Mg-dependent methyl migration to produce 3-hydroxy-3-methyl-2-ketobutyrate (HMKB). In the reductase reaction, this 2-ketoacid undergoes a metal-dependent reduction by NADPH to yield (R)-2,3-dihydroxy-isovalerate. This chain is Ketol-acid reductoisomerase (NADP(+)), found in Jannaschia sp. (strain CCS1).